The primary structure comprises 217 residues: Large ribosomal subunit protein uL3 (217 aa).

The tract at residues 127-162 (GFSRGPMSHGSKNHRAPGSTGAGTTPGRIYPGKRMA) is disordered. The segment covering 142–153 (APGSTGAGTTPG) has biased composition (low complexity).

Belongs to the universal ribosomal protein uL3 family. In terms of assembly, part of the 50S ribosomal subunit. Forms a cluster with proteins L14 and L19.

Functionally, one of the primary rRNA binding proteins, it binds directly near the 3'-end of the 23S rRNA, where it nucleates assembly of the 50S subunit. This is Large ribosomal subunit protein uL3 from Prochlorococcus marinus (strain MIT 9312).